We begin with the raw amino-acid sequence, 136 residues long: Histone H3.3 (136 aa).

The segment at methionine 1–arginine 43 is disordered. Lysine 5 carries the post-translational modification N6-methylated lysine. The residue at position 10 (lysine 10) is an N6-acetyllysine; alternate. At lysine 10 the chain carries N6-methylated lysine; alternate. Serine 11 carries the post-translational modification Phosphoserine. Threonine 12 carries the post-translational modification Phosphothreonine. An N6-acetyllysine modification is found at lysine 15. An N6-acetyllysine; alternate mark is found at lysine 19 and lysine 24. Residues lysine 19 and lysine 24 each carry the N6-methylated lysine; alternate modification. Lysine 28 carries the post-translational modification N6-methylated lysine. A Phosphoserine modification is found at serine 29. Lysine 37 is subject to N6-methylated lysine.

Belongs to the histone H3 family. The nucleosome is a histone octamer containing two molecules each of H2A, H2B, H3 and H4 assembled in one H3-H4 heterotetramer and two H2A-H2B heterodimers. The octamer wraps approximately 147 bp of DNA. In terms of processing, acetylation is generally linked to gene activation. Can be acetylated to form H3K9ac, H3K14ac, H3K18ac and H3K23ac. H3K9ac could compete with H3K9me and prevent gene silencing. H3K9ac is restricted to euchromatin. Methylated to form mainly H3K4me, H3K9me, H3K18me, H3K23me, H3K27me and H3K36me. H3K4me1/2/3, H3K9me3, H3K27me3 and H3K36me1/2/3 are typical marks for euchromatin, whereas heterochromatic chromocenters are enriched in H3K9me1/2 and H3K27me1/2. H2BK143ub1 is probably prerequisite for H3K4me. Post-translationally, can be phosphorylated to form H3S10ph, H3T11ph and H3S28ph.

It is found in the nucleus. The protein localises to the chromosome. In terms of biological role, variant histone H3 which replaces conventional H3 in a wide range of nucleosomes in active genes. Constitutes the predominant form of histone H3 in non-dividing cells and is incorporated into chromatin independently of DNA synthesis. Deposited at sites of nucleosomal displacement throughout transcribed genes, suggesting that it represents an epigenetic imprint of transcriptionally active chromatin. Nucleosomes wrap and compact DNA into chromatin, limiting DNA accessibility to the cellular machineries which require DNA as a template. Histones thereby play a central role in transcription regulation, DNA repair, DNA replication and chromosomal stability. DNA accessibility is regulated via a complex set of post-translational modifications of histones, also called histone code, and nucleosome remodeling. The sequence is that of Histone H3.3 (HIS3) from Gossypium hirsutum (Upland cotton).